A 587-amino-acid chain; its full sequence is Inorganic phosphate transporter PHO84 (587 aa).

Residues 1–67 lie on the Extracellular side of the membrane; that stretch reads MSSVNKDTIH…FGWQQVKTIS (67 aa). Lysine 6 participates in a covalent cross-link: Glycyl lysine isopeptide (Lys-Gly) (interchain with G-Cter in ubiquitin). Residues 68–88 form a helical membrane-spanning segment; it reads IAGVGFLTDSYDIFAINLGIT. Topologically, residues 89–108 are cytoplasmic; sequence MMSYVYWHGSMPGPSQTLLK. A helical membrane pass occupies residues 109-129; the sequence is VSTSVGTVIGQFGFGTLADIV. Over 130 to 133 the chain is Extracellular; the sequence is GRKR. A helical membrane pass occupies residues 134-154; sequence IYGMELIIMIVCTILQTTVAH. At 155–156 the chain is on the cytoplasmic side; the sequence is SP. Residues 157–177 form a helical membrane-spanning segment; it reads AINFVAVLTFYRIVMGIGIGG. Residues 178–201 are Extracellular-facing; sequence DYPLSSIITSEFATTKWRGAIMGA. The chain crosses the membrane as a helical span at residues 202-222; sequence VFANQAWGQISGGIIALILVA. Topologically, residues 223–250 are cytoplasmic; it reads AYKGELEYANSGAECDARCQKACDQMWR. A helical membrane pass occupies residues 251–271; the sequence is ILIGLGTVLGLACLYFRLTIP. At 272–345 the chain is on the extracellular side; that stretch reads ESPRYQLDVN…RHFGQWKYGK (74 aa). Lysine 298 is covalently cross-linked (Glycyl lysine isopeptide (Lys-Gly) (interchain with G-Cter in ubiquitin)). Position 302 is a phosphothreonine (threonine 302). Serine 303 and serine 316 each carry phosphoserine. Threonine 317 is modified (phosphothreonine). The residue at position 321 (serine 321) is a Phosphoserine. A helical transmembrane segment spans residues 346–366; that stretch reads ILLGTAGSWFTLDVAFYGLSL. Over 367–395 the chain is Cytoplasmic; the sequence is NSAVILQTIGYAGSKNVYKKLYDTAVGNL. A helical membrane pass occupies residues 396–416; that stretch reads ILICAGSLPGYWVSVFTVDII. At 417–419 the chain is on the extracellular side; sequence GRK. The helical transmembrane segment at 420-440 threads the bilayer; sequence PIQLAGFIILTALFCVIGFAY. The Cytoplasmic segment spans residues 441–442; that stretch reads HK. The chain crosses the membrane as a helical span at residues 443-463; that stretch reads LGDHGLLALYVICQFFQNFGP. The Extracellular portion of the chain corresponds to 464-485; the sequence is NTTTFIVPGECFPTRYRSTAHG. Residues 486 to 506 form a helical membrane-spanning segment; the sequence is ISAASGKVGAIIAQTALGTLI. The Cytoplasmic segment spans residues 507-522; it reads DHNCARDGKPTNCWLP. A helical transmembrane segment spans residues 523-543; the sequence is HVMEIFALFMLLGIFTTLLIP. Topologically, residues 544–587 are extracellular; the sequence is ETKRKTLEEINELYHDEIDPATLNFRNKNNDIESSSPSQLQHEA. Residues 568–587 form a disordered region; sequence FRNKNNDIESSSPSQLQHEA. Phosphoserine occurs at positions 577, 579, and 581.

Belongs to the major facilitator superfamily. Phosphate:H(+) symporter (TC 2.A.1.9) family. May function as a monomer. In terms of processing, phosphorylated; phosphorylation increases after phosphate addition to the growth medium. Ubiquitinated in a phosphate-dependent manner; ubiquitination may influence the trafficking of PHO84 to the cell membrane and serve as a signal for endocytosis and internalization.

Its subcellular location is the cell membrane. The protein localises to the vacuole. The catalysed reaction is phosphate(in) + H(+)(in) = phosphate(out) + H(+)(out). It catalyses the reaction Mn(2+)(in) = Mn(2+)(out). It carries out the reaction Zn(2+)(in) = Zn(2+)(out). The enzyme catalyses Cu(2+)(in) = Cu(2+)(out). The catalysed reaction is Co(2+)(in) = Co(2+)(out). With respect to regulation, transport activity is inhibited in the presence of the protonophore carbonylcyanide m-chlorophenylhydrazone. Transport activity is inhibited by glycerol-3-phosphate. Transport activity is inhibited by phosphonoacetic acid. Signaling activity is stimulated by glycerol-3-phosphate which acts as a nontransported PHO84 agonist that can trigger PKA signaling. Signaling activity is stimulated by arsenate. Its function is as follows. Proton-coupled high-affinity transporter for external inorganic phosphate. Acts as a transceptor, a membrane protein that in addition to its transporter activity also possesses receptor-like signaling activity; mediates activation of the protein kinase A (PKA) pathway targets during growth induction, triggered by phosphate addition to cells growth-arrested due to previous phosphate starvation. Is not an essential protein, since constitutive, low affinity phosphate transporters exist in yeast. Can function as a low affinity metal transporter that transports manganese, zinc, cobalt and copper. Plays a role in manganese homeostasis predominantly under manganese surplus conditions. This chain is Inorganic phosphate transporter PHO84 (PHO84), found in Saccharomyces cerevisiae (strain ATCC 204508 / S288c) (Baker's yeast).